The chain runs to 200 residues: Superoxide dismutase [Mn] (200 aa).

Residues His27, His77, Asp160, and His164 each coordinate Mn(2+).

Belongs to the iron/manganese superoxide dismutase family. Homodimer. Requires Mn(2+) as cofactor.

The enzyme catalyses 2 superoxide + 2 H(+) = H2O2 + O2. Destroys superoxide anion radicals which are normally produced within the cells and which are toxic to biological systems. This Rhizobium meliloti (strain 1021) (Ensifer meliloti) protein is Superoxide dismutase [Mn] (sodB).